Here is a 521-residue protein sequence, read N- to C-terminus: Type II methyltransferase M.AluI (521 aa).

The SAM-dependent MTase C5-type domain occupies 8–491 (YSFVDLFAGI…REHVRRDRAL (484 aa)). The active site involves Cys84.

This sequence belongs to the class I-like SAM-binding methyltransferase superfamily. C5-methyltransferase family.

The enzyme catalyses a 2'-deoxycytidine in DNA + S-adenosyl-L-methionine = a 5-methyl-2'-deoxycytidine in DNA + S-adenosyl-L-homocysteine + H(+). In terms of biological role, a methylase, recognizes the double-stranded sequence 5'-AGCT-3', methylates C-3 on both strands, and protects the DNA from cleavage by the AluI endonuclease. In Cellulosimicrobium cellulans (Arthrobacter luteus), this protein is Type II methyltransferase M.AluI.